Consider the following 194-residue polypeptide: Surfactant protein C (194 aa).

Residues 1 to 21 (MDMGSKEVLMESPPDYSTGPR) are disordered. Positions 1 to 23 (MDMGSKEVLMESPPDYSTGPRSQ) are excised as a propeptide. Residues Cys28 and Cys29 are each lipidated (S-palmitoyl cysteine). Positions 59–194 (HMSQKHTEMV…LCGELPLYYI (136 aa)) are excised as a propeptide. A BRICHOS domain is found at 95–194 (FSIGSTGIVL…LCGELPLYYI (100 aa)). Cysteines 122 and 186 form a disulfide. Positions 149–170 (SSTPTSKLGQEEGHSAGSDSDS) are disordered.

The protein localises to the secreted. The protein resides in the extracellular space. It is found in the surface film. Pulmonary surfactant associated proteins promote alveolar stability by lowering the surface tension at the air-liquid interface in the peripheral air spaces. This Rattus norvegicus (Rat) protein is Surfactant protein C.